Here is a 541-residue protein sequence, read N- to C-terminus: MADEDGEGIHPAAPHRNGGGGGGGGSGLHCAGNGGGGGGGPRVVRIVKSESGYGFNVRGQVSEGGQLRSINGELYAPLQHVSAVLPGGAADRAGVRKGDRILEVNGVNVEGATHKQVVDLIRAGEKELILTVLSVPPHEADNLDPSDDSLGQSFYDYTEKQAVPISVPTYKHVEQNGEKFVVYNVYMAGRQLCSKRYREFAILHQNLKREFANFTFPRLPGKWPFSLSEQQLDARRRGLEEYLEKVCSIRVIGESDIMQEFLSESDENYNGVSDVELRVALPDGTTVTVRVKKNSTTDQVYQAIAAKVGMDSTTVNYFALFEVINHSFVRKLAPNEFPHKLYVQNYTSAVPGTCLTIRKWLFTTEEEILLNDNDLAVTYFFHQAVDDVKKGYIKAEEKSYQLQKLYEQRKMVMYLNMLRTCEGYNEIIFPHCACDSRRKGHVITAISITHFKLHACTEEGQLENQVIAFEWDEMQRWDTDEEGMAFCFEYARGEKKPRWVKIFTPYFNYMHECFERVFCELKWRKENIFQMARSQQRDVAT.

The interval 1-26 is disordered; that stretch reads MADEDGEGIHPAAPHRNGGGGGGGGS. The span at 17–26 shows a compositional bias: gly residues; sequence NGGGGGGGGS. The PDZ domain occupies 43-136; it reads VVRIVKSESG…ELILTVLSVP (94 aa). Residues serine 51 and serine 62 each carry the phosphoserine modification. A PX domain is found at 161–269; the sequence is QAVPISVPTY…EFLSESDENY (109 aa). Residues 273–362 enclose the Ras-associating domain; sequence SDVELRVALP…TCLTIRKWLF (90 aa). The tract at residues 273 to 362 is FERM-like region F1; that stretch reads SDVELRVALP…TCLTIRKWLF (90 aa). The segment at 373–421 is FERM-like region F2; it reads NDLAVTYFFHQAVDDVKKGYIKAEEKSYQLQKLYEQRKMVMYLNMLRTC. Residues 425–525 are FERM-like region F3; the sequence is NEIIFPHCAC…RVFCELKWRK (101 aa).

As to quaternary structure, core component of the SNX27-retromer, a multiprotein complex composed of SNX27, the WASH complex and the retromer complex. Interacts (via PDZ domain) with a number of target transmembrane proteins (via PDZ-binding motif): ABCC4, ADRB2, ARHGEF7, GRIA1, GRIA2, GRIN1, GRIN2A GRIN2C, KCNJ6, KCNJ9 and SLC2A1/GLUT1. Interacts (via the FERM-like regions) with the WASH complex. Interacts with SNX1. Interacts with CYTIP. Interacts with DGKZ. Interacts with MCC. Interacts (via PDZ domains) with SLC9A3; directs SLC9A3 membrane insertion from early endosomes to the plasma membrane.

The protein resides in the early endosome membrane. The protein localises to the cytoplasm. It localises to the cytosol. Involved in the retrograde transport from endosome to plasma membrane, a trafficking pathway that promotes the recycling of internalized transmembrane proteins. Following internalization, endocytosed transmembrane proteins are delivered to early endosomes and recycled to the plasma membrane instead of being degraded in lysosomes. SNX27 specifically binds and directs sorting of a subset of transmembrane proteins containing a PDZ-binding motif at the C-terminus: following interaction with target transmembrane proteins, associates with the retromer complex, preventing entry into the lysosomal pathway, and promotes retromer-tubule based plasma membrane recycling. SNX27 also binds with the WASH complex. Interacts with membranes containing phosphatidylinositol-3-phosphate (PtdIns(3P)). May participate in establishment of natural killer cell polarity. Recruits CYTIP to early endosomes. The chain is Sorting nexin-27 (SNX27) from Bos taurus (Bovine).